The sequence spans 211 residues: Small ribosomal subunit protein uS3 (211 aa).

A KH type-2 domain is found at 16-85 (IDEYFKTKLV…NPQIEVKQVE (70 aa)).

It belongs to the universal ribosomal protein uS3 family. In terms of assembly, part of the 30S ribosomal subunit.

Binds the lower part of the 30S subunit head. This is Small ribosomal subunit protein uS3 from Methanococcus maripaludis (strain C5 / ATCC BAA-1333).